The primary structure comprises 111 residues: P antigen family member 2 (111 aa).

The tract at residues 1-66 is disordered; that stretch reads MSELLRARSQ…NQAVPAFQGP (66 aa). Positions 8–24 are enriched in polar residues; that stretch reads RSQSSERGNDQESSQPV.

Belongs to the GAGE family.

This is P antigen family member 2 (PAGE2) from Homo sapiens (Human).